Consider the following 124-residue polypeptide: Small ribosomal subunit protein uS12 (124 aa).

Residues 1–24 (MTTINQLVRKPRQATTYKSASPAL) are disordered. Asp89 carries the 3-methylthioaspartic acid modification.

This sequence belongs to the universal ribosomal protein uS12 family. Part of the 30S ribosomal subunit. Contacts proteins S8 and S17. May interact with IF1 in the 30S initiation complex.

Its function is as follows. With S4 and S5 plays an important role in translational accuracy. In terms of biological role, interacts with and stabilizes bases of the 16S rRNA that are involved in tRNA selection in the A site and with the mRNA backbone. Located at the interface of the 30S and 50S subunits, it traverses the body of the 30S subunit contacting proteins on the other side and probably holding the rRNA structure together. The combined cluster of proteins S8, S12 and S17 appears to hold together the shoulder and platform of the 30S subunit. In Xanthomonas axonopodis pv. citri (strain 306), this protein is Small ribosomal subunit protein uS12.